Consider the following 235-residue polypeptide: Zinc transporter ZIP9 (235 aa).

N-linked (GlcNAc...) asparagine glycosylation is present at asparagine 2. 4 helical membrane passes run 11-31 (SCVP…CWWT), 75-95 (TTTL…GAAA), 104-124 (LIVF…LVSF), and 138-158 (HLLV…LGLS). An N-linked (GlcNAc...) asparagine glycan is attached at asparagine 169. 2 helical membrane passes run 172 to 192 (GMAM…HVLP) and 214 to 234 (LEVA…VGHQ).

The protein belongs to the ZIP transporter (TC 2.A.5) family.

The protein resides in the golgi apparatus. It is found in the trans-Golgi network membrane. It localises to the cell membrane. Its subcellular location is the cytoplasm. The protein localises to the perinuclear region. The protein resides in the mitochondrion. It is found in the nucleus. It carries out the reaction Zn(2+)(in) = Zn(2+)(out). In terms of biological role, transports zinc ions across cell and organelle membranes into the cytoplasm and regulates intracellular zinc homeostasis. Participates in the zinc ions efflux out of the secretory compartments. Regulates intracellular zinc level, resulting in the enhancement of AKT1 and MAPK3/MAPK1 (Erk1/2) phosphorylation in response to the BCR activation. Also functions as a membrane androgen receptor that mediates, through a G protein, the non-classical androgen signaling pathway, characterized by the activation of MAPK3/MAPK1 (Erk1/2) and transcription factors CREB1 or ATF1. This pathway contributes to CLDN1 and CLDN5 expression and tight junction formation between adjacent Sertoli cells. Mediates androgen-induced vascular endothelial cell proliferation through activation of an inhibitory G protein leading to the AKT1 and MAPK3/MAPK1 (Erk1/2) activation which in turn modulate inhibition (phosphorylation) of GSK3B and CCND1 transcription. Moreover, has dual functions as a membrane-bound androgen receptor and as an androgen-dependent zinc transporter both of which are mediated through an inhibitory G protein (Gi) that mediates both MAP kinase and zinc signaling leading to the androgen-dependent apoptotic process. The chain is Zinc transporter ZIP9 from Macaca fascicularis (Crab-eating macaque).